We begin with the raw amino-acid sequence, 350 residues long: Small-conductance mechanosensitive channel MscMJ (350 aa).

Helical transmembrane passes span 10–30, 59–79, 91–111, 130–150, and 154–174; these read ISNILIFVVITLLGIFIGKIV, LPIIVLVVTLFFYFGLRFLIL, VKVVVILSATYFAVKFIDGIF, IIKPLKKVVKILTILLGILTA, and VGYDITALLAGLGVGGLALAL.

It belongs to the MscS (TC 1.A.23) family.

Its subcellular location is the cell membrane. Small-conductance mechanosensitive channel that opens in response to stretch forces in the membrane lipid bilayer. Exhibits a sixfold preference for cations over anions. Non-rectifying. The polypeptide is Small-conductance mechanosensitive channel MscMJ (Methanocaldococcus jannaschii (strain ATCC 43067 / DSM 2661 / JAL-1 / JCM 10045 / NBRC 100440) (Methanococcus jannaschii)).